Here is a 339-residue protein sequence, read N- to C-terminus: Lipopolysaccharide glucosyltransferase WaaO (339 aa).

UDP contacts are provided by residues 34 to 39 (GTDKNF) and 131 to 132 (DA). Residues aspartate 131 and aspartate 133 each coordinate Mg(2+). 2 consecutive short sequence motifs (DXD) follow at residues 131-133 (DAD) and 220-222 (DQD). Histidine 265 is a Mg(2+) binding site. A UDP-binding site is contributed by 265–271 (HYIGPTK).

It belongs to the glycosyltransferase 8 family. Mg(2+) serves as cofactor.

It carries out the reaction UDP-glucose + lipopolysaccharide = UDP + alpha-D-glucosyl-lipopolysaccharide.. The catalysed reaction is alpha-D-Gal-(1-&gt;6)-alpha-D-Glc-(1-&gt;3)-[L-alpha-D-Hep-(1-&gt;7)]-4-O-PO3(2-)-L-alpha-D-Hep-(1-&gt;3)-4-O-PO3(2-)-L-alpha-D-Hep-(1-&gt;5)-[alpha-Kdo-(2-&gt;4)]-alpha-Kdo-(2-&gt;6)-lipid A + UDP-alpha-D-glucose = alpha-D-Glc-(1-&gt;3)-[alpha-D-Gal-(1-&gt;6)]-alpha-D-Glc-(1-&gt;3)-[L-alpha-D-Hep-(1-&gt;7)]-4-O-PO3(2-)-L-alpha-D-Hep-(1-&gt;3)-4-O-PO3(2-)-L-alpha-D-Hep-(1-&gt;5)-[alpha-Kdo-(2-&gt;4)]-alpha-Kdo-(2-&gt;6)-lipid A + UDP + H(+). It functions in the pathway bacterial outer membrane biogenesis; LPS core biosynthesis. Its function is as follows. Glucosyltransferase involved in the biosynthesis of the core oligosaccharide region of lipopolysaccharide (LPS). Catalyzes the addition of a second glucose (glucose II) to the first outer-core glucose (glucose I). In vitro, can add multiple glucose residues to its lipid acceptor. Activity does not require the branched galactose added by WaaB, but it is higher in the presence of this branched galactose. In the absence of a lipid acceptor, can hydrolyze UDP-glucose, but not UDP-galactose. This is Lipopolysaccharide glucosyltransferase WaaO from Escherichia coli (strain K12).